Here is a 285-residue protein sequence, read N- to C-terminus: Acetyl-coenzyme A carboxylase carboxyl transferase subunit beta (285 aa).

The 264-residue stretch at 22–285 (LWTKCEACGA…HPGVAYAPGV (264 aa)) folds into the CoA carboxyltransferase N-terminal domain. Positions 26, 29, 45, and 48 each coordinate Zn(2+). The segment at 26–48 (CEACGAQIYKKEFQENLHVCPKC) adopts a C4-type zinc-finger fold.

The protein belongs to the AccD/PCCB family. Acetyl-CoA carboxylase is a heterohexamer composed of biotin carboxyl carrier protein (AccB), biotin carboxylase (AccC) and two subunits each of ACCase subunit alpha (AccA) and ACCase subunit beta (AccD). Requires Zn(2+) as cofactor.

The protein resides in the cytoplasm. The enzyme catalyses N(6)-carboxybiotinyl-L-lysyl-[protein] + acetyl-CoA = N(6)-biotinyl-L-lysyl-[protein] + malonyl-CoA. It functions in the pathway lipid metabolism; malonyl-CoA biosynthesis; malonyl-CoA from acetyl-CoA: step 1/1. Component of the acetyl coenzyme A carboxylase (ACC) complex. Biotin carboxylase (BC) catalyzes the carboxylation of biotin on its carrier protein (BCCP) and then the CO(2) group is transferred by the transcarboxylase to acetyl-CoA to form malonyl-CoA. In Thermus thermophilus (strain ATCC BAA-163 / DSM 7039 / HB27), this protein is Acetyl-coenzyme A carboxylase carboxyl transferase subunit beta.